We begin with the raw amino-acid sequence, 113 residues long: MGNYHVTLQASYIAKNVEDVEDAIGVAISQIGKLLNKGSLDYVDIDVGLTICPKCGEPIDCVLVVAKTAIVGILLSMKVFNAESPEHAVRIAKSSIGRALKDIPLEDVDVVEI.

It belongs to the UPF0212 family.

The chain is UPF0212 protein MmarC6_1165 from Methanococcus maripaludis (strain C6 / ATCC BAA-1332).